The primary structure comprises 321 residues: Triplex capsid protein 2 (321 aa).

Belongs to the herpesviridae TRX2 protein family. Interacts with TRX1 and major capisd protein/MCP.

Its subcellular location is the virion. The protein resides in the host nucleus. Its function is as follows. Structural component of the T=16 icosahedral capsid. The capsid is composed of pentamers and hexamers of major capsid protein/MCP, which are linked together by heterotrimers called triplexes. These triplexes are formed by a single molecule of triplex protein 1/TRX1 and two copies of triplex protein 2/TRX2. Additionally, TRX1 is required for efficient transport of TRX2 to the nucleus, which is the site of capsid assembly. The polypeptide is Triplex capsid protein 2 (Amazona oratrix (yellow-headed parrot)).